Here is a 420-residue protein sequence, read N- to C-terminus: Protein ECERIFERUM 26-like (420 aa).

Belongs to the plant acyltransferase family. Highly expressed in flowers. Expressed in leaves.

Functionally, involved in biosynthesis of the epicuticular wax. Plays a role in very-long-chain fatty acid (VLCFA) biosynthesis and is required for VLCFA elongation in leaf. Despite its classification as a BAHD acyltransferase based on sequence homology, CER26L does not seem to share the catalytic mechanism of the members of the BAHD family. The sequence is that of Protein ECERIFERUM 26-like (CER26L) from Arabidopsis thaliana (Mouse-ear cress).